A 277-amino-acid polypeptide reads, in one-letter code: 2-dehydro-3-deoxyphosphooctonate aldolase (277 aa).

Belongs to the KdsA family.

It localises to the cytoplasm. It carries out the reaction D-arabinose 5-phosphate + phosphoenolpyruvate + H2O = 3-deoxy-alpha-D-manno-2-octulosonate-8-phosphate + phosphate. The protein operates within carbohydrate biosynthesis; 3-deoxy-D-manno-octulosonate biosynthesis; 3-deoxy-D-manno-octulosonate from D-ribulose 5-phosphate: step 2/3. It participates in bacterial outer membrane biogenesis; lipopolysaccharide biosynthesis. This chain is 2-dehydro-3-deoxyphosphooctonate aldolase, found in Brucella anthropi (strain ATCC 49188 / DSM 6882 / CCUG 24695 / JCM 21032 / LMG 3331 / NBRC 15819 / NCTC 12168 / Alc 37) (Ochrobactrum anthropi).